Here is a 212-residue protein sequence, read N- to C-terminus: Urease accessory protein UreG 2 (212 aa).

11 to 18 is a GTP binding site; it reads GPVGSGKM.

The protein belongs to the SIMIBI class G3E GTPase family. UreG subfamily. Homodimer. UreD, UreF and UreG form a complex that acts as a GTP-hydrolysis-dependent molecular chaperone, activating the urease apoprotein by helping to assemble the nickel containing metallocenter of UreC. The UreE protein probably delivers the nickel.

The protein resides in the cytoplasm. In terms of biological role, facilitates the functional incorporation of the urease nickel metallocenter. This process requires GTP hydrolysis, probably effectuated by UreG. Functionally, disrupting the ure2 operon has no effect on urease activity, or pathogen survival in BALB/c mice when inoculated by gavage, but confers slightly enhanced resistance to low pH killing in vitro. This chain is Urease accessory protein UreG 2, found in Brucella suis biovar 1 (strain 1330).